A 103-amino-acid polypeptide reads, in one-letter code: MQANDITFFQRFQEDILAGRKTITIRDAAESHFKPGDVLRVGRYEDDGYFCTIAVTATSTVTLDTLTEEHARQENMTLEQLRQVIMEIYPAEDRFYVIEFKRL.

In terms of domain architecture, ASCH spans 6 to 100 (ITFFQRFQED…AEDRFYVIEF (95 aa)). Lys21 functions as the Proton acceptor in the catalytic mechanism. Residue Thr24 is the Nucleophile of the active site. Glu74 acts as the Proton donor in catalysis.

This sequence belongs to the N(4)-acetylcytidine amidohydrolase family.

It carries out the reaction N(4)-acetylcytidine + H2O = cytidine + acetate + H(+). The enzyme catalyses N(4)-acetyl-2'-deoxycytidine + H2O = 2'-deoxycytidine + acetate + H(+). The catalysed reaction is N(4)-acetylcytosine + H2O = cytosine + acetate + H(+). In terms of biological role, catalyzes the hydrolysis of N(4)-acetylcytidine (ac4C). The polypeptide is N(4)-acetylcytidine amidohydrolase (Klebsiella pneumoniae (strain 342)).